The chain runs to 292 residues: Elongation factor Ts (292 aa).

Residues 82-85 (TDFV) are involved in Mg(2+) ion dislocation from EF-Tu.

It belongs to the EF-Ts family.

The protein resides in the cytoplasm. Associates with the EF-Tu.GDP complex and induces the exchange of GDP to GTP. It remains bound to the aminoacyl-tRNA.EF-Tu.GTP complex up to the GTP hydrolysis stage on the ribosome. This Legionella pneumophila (strain Paris) protein is Elongation factor Ts.